The sequence spans 403 residues: Na(+)/H(+) antiporter NhaH (403 aa).

Residues 1 to 6 are Cytoplasmic-facing; that stretch reads MHGFHD. The chain crosses the membrane as a helical span at residues 7 to 27; sequence VFIQILLLLAISVSVIAIAKL. Residues 28–30 are Extracellular-facing; the sequence is LKE. The helical transmembrane segment at 31 to 51 threads the bilayer; the sequence is PDSIALVLVGLVLGLTELPII. The Cytoplasmic segment spans residues 52–65; sequence EDAERYITQSEVFQ. Residues 66 to 86 traverse the membrane as a helical segment; that stretch reads ATIISLFLPILLGDATLKLPF. Topologically, residues 87 to 98 are extracellular; that stretch reads HHLFSQKKTVLG. A helical transmembrane segment spans residues 99–119; that stretch reads LAFVGTFVSSICIGTAAYFLL. The Cytoplasmic segment spans residues 120–124; the sequence is DLPLA. Residues 125–145 traverse the membrane as a helical segment; it reads VAFTFAALMSATDPISVLSIF. The Extracellular segment spans residues 146 to 167; sequence KSLGVPQKMSTVMEGESLFNDG. The helical transmembrane segment at 168–188 threads the bilayer; that stretch reads IAVVLFKIASIYLLTYMEMGW. Topologically, residues 189–195 are cytoplasmic; that stretch reads AGLGSGV. Residues 196–216 traverse the membrane as a helical segment; that stretch reads FLFLKFAIGGALVGLVLGYFF. Over 217–218 the chain is Extracellular; the sequence is SQ. A helical membrane pass occupies residues 219 to 239; that stretch reads VIRVFDDYPLEVAFSALLFFG. Residues 240–241 are Cytoplasmic-facing; the sequence is SY. The chain crosses the membrane as a helical span at residues 242 to 262; sequence FIAEHFHTSGVIAVVVGGFVF. The Extracellular portion of the chain corresponds to 263–281; it reads GDYGAKIGMSKETKTNINT. A helical membrane pass occupies residues 282 to 302; the sequence is FWDSVTLIANALIFLMVGLEI. Residues 303-310 lie on the Cytoplasmic side of the membrane; it reads RNIDLAGN. A helical transmembrane segment spans residues 311–331; that stretch reads WGVIVGAILIVLVGRTIAVYL. Residues 332-372 are Extracellular-facing; sequence GTGWVQELSSKERLLINWGGLRGSLSVALALSLPMDFAGRD. A helical membrane pass occupies residues 373 to 393; that stretch reads QVLLLTFSVVLFSLIVQGLTL. The Cytoplasmic segment spans residues 394-403; sequence KPLIKKLGMI.

It belongs to the monovalent cation:proton antiporter 1 (CPA1) transporter (TC 2.A.36) family.

The protein localises to the cell membrane. Its function is as follows. Na(+)/H(+) antiporter that extrudes sodium in exchange for external protons. Can also transport lithium. This chain is Na(+)/H(+) antiporter NhaH (nhaH), found in Halobacillus dabanensis.